Here is a 230-residue protein sequence, read N- to C-terminus: Cytochrome c oxidase subunit 2 (230 aa).

Topologically, residues 1–14 (MAHPSQLGFQDAAS) are mitochondrial intermembrane. The helical transmembrane segment at 15-45 (PVMEELIHFHDHTLMIVFLISTLVLYIITAM) threads the bilayer. Residues 46-59 (VSTKLTNKYILDSQ) lie on the Mitochondrial matrix side of the membrane. Residues 60–87 (EIEIVWTILPAIILIMIALPSLRILYLM) form a helical membrane-spanning segment. Residues 88–230 (DEINDPHLTI…TWSSLMLEEA (143 aa)) are Mitochondrial intermembrane-facing. 6 residues coordinate Cu cation: H161, C196, E198, C200, H204, and M207. E198 contributes to the Mg(2+) binding site.

Belongs to the cytochrome c oxidase subunit 2 family. In terms of assembly, component of the cytochrome c oxidase (complex IV, CIV), a multisubunit enzyme composed of 14 subunits. The complex is composed of a catalytic core of 3 subunits MT-CO1, MT-CO2 and MT-CO3, encoded in the mitochondrial DNA, and 11 supernumerary subunits COX4I, COX5A, COX5B, COX6A, COX6B, COX6C, COX7A, COX7B, COX7C, COX8 and NDUFA4, which are encoded in the nuclear genome. The complex exists as a monomer or a dimer and forms supercomplexes (SCs) in the inner mitochondrial membrane with NADH-ubiquinone oxidoreductase (complex I, CI) and ubiquinol-cytochrome c oxidoreductase (cytochrome b-c1 complex, complex III, CIII), resulting in different assemblies (supercomplex SCI(1)III(2)IV(1) and megacomplex MCI(2)III(2)IV(2)). Found in a complex with TMEM177, COA6, COX18, COX20, SCO1 and SCO2. Interacts with TMEM177 in a COX20-dependent manner. Interacts with COX20. Interacts with COX16. Requires Cu cation as cofactor.

Its subcellular location is the mitochondrion inner membrane. The enzyme catalyses 4 Fe(II)-[cytochrome c] + O2 + 8 H(+)(in) = 4 Fe(III)-[cytochrome c] + 2 H2O + 4 H(+)(out). Component of the cytochrome c oxidase, the last enzyme in the mitochondrial electron transport chain which drives oxidative phosphorylation. The respiratory chain contains 3 multisubunit complexes succinate dehydrogenase (complex II, CII), ubiquinol-cytochrome c oxidoreductase (cytochrome b-c1 complex, complex III, CIII) and cytochrome c oxidase (complex IV, CIV), that cooperate to transfer electrons derived from NADH and succinate to molecular oxygen, creating an electrochemical gradient over the inner membrane that drives transmembrane transport and the ATP synthase. Cytochrome c oxidase is the component of the respiratory chain that catalyzes the reduction of oxygen to water. Electrons originating from reduced cytochrome c in the intermembrane space (IMS) are transferred via the dinuclear copper A center (CU(A)) of subunit 2 and heme A of subunit 1 to the active site in subunit 1, a binuclear center (BNC) formed by heme A3 and copper B (CU(B)). The BNC reduces molecular oxygen to 2 water molecules using 4 electrons from cytochrome c in the IMS and 4 protons from the mitochondrial matrix. The polypeptide is Cytochrome c oxidase subunit 2 (MT-CO2) (Scyliorhinus canicula (Small-spotted catshark)).